Reading from the N-terminus, the 381-residue chain is Meiotic recombination protein SPO11-1 (381 aa).

In terms of domain architecture, Topo IIA-type catalytic spans 23-162 (EEAATLLHRI…LNVVPVAKGL (140 aa)). Y123 acts as the O-(5'-phospho-DNA)-tyrosine intermediate in catalysis. The Mg(2+) site is built by E209 and D261.

Belongs to the TOP6A family. Mg(2+) serves as cofactor. As to expression, highly expressed in flowers before pollination. Expressed in roots and shoots.

The protein resides in the nucleus. The catalysed reaction is ATP-dependent breakage, passage and rejoining of double-stranded DNA.. In terms of biological role, required for meiotic recombination. Mediates DNA cleavage that forms the double-strand breaks (DSB) that initiate meiotic recombination. May be involved in plant growth and development, and stress tolerance. This chain is Meiotic recombination protein SPO11-1 (SPO11-1), found in Oryza sativa subsp. indica (Rice).